The sequence spans 325 residues: Collagen alpha-1(IX) chain (325 aa).

Low complexity predominate over residues P1 to L54. 2 disordered regions span residues P1–D163 and R187–K325. The segment covering R198–P208 has biased composition (pro residues). Positions P237 to P249 are enriched in basic and acidic residues. Residues V292–F304 show a composition bias toward pro residues.

The protein belongs to the fibril-associated collagens with interrupted helices (FACIT) family. As to quaternary structure, heterotrimer of an alpha 1(IX), an alpha 2(IX) and an alpha 3(IX) chain. Covalently linked to the telopeptides of type II collagen by lysine-derived cross-links. In terms of processing, prolines at the third position of the tripeptide repeating unit (G-X-Y) are hydroxylated in some or all of the chains.

It localises to the secreted. It is found in the extracellular space. The protein resides in the extracellular matrix. In terms of biological role, structural component of hyaline cartilage and vitreous of the eye. The sequence is that of Collagen alpha-1(IX) chain (Col9a1) from Rattus norvegicus (Rat).